A 184-amino-acid polypeptide reads, in one-letter code: Photosystem I assembly protein Ycf4 (184 aa).

2 helical membrane passes run 19 to 39 (ISNF…LLVG) and 57 to 77 (IIFF…LFIS).

The protein belongs to the Ycf4 family.

It is found in the plastid. The protein resides in the chloroplast thylakoid membrane. Its function is as follows. Seems to be required for the assembly of the photosystem I complex. This chain is Photosystem I assembly protein Ycf4, found in Cucumis sativus (Cucumber).